The primary structure comprises 185 residues: Casparian strip membrane protein 5 (185 aa).

At 1–25 (MKAEAVESGEASTIIAAPKRGINRG) the chain is on the cytoplasmic side. Residues 26 to 46 (ISIADLILRGVAAIGTFASAL) traverse the membrane as a helical segment. Topologically, residues 47–75 (TMGTTSETLTIFTQPIMIRAKYNDLPSLT) are extracellular. Residues 76-96 (FFVIANSIVCGYLVLSIPLSI) form a helical membrane-spanning segment. Residues 97–108 (SHFIRREARITR) are Cytoplasmic-facing. The chain crosses the membrane as a helical span at residues 109 to 129 (IILVIFDTAMVELLTAGASAA). Residues 130 to 160 (TVVVYLAHKRNANWLAICQQFNNFCERISGS) lie on the Extracellular side of the membrane. The helical transmembrane segment at 161 to 181 (LIGSFASIIMIMLIIITSAVA) threads the bilayer. Residues 182–185 (LSRH) are Cytoplasmic-facing.

The protein belongs to the Casparian strip membrane proteins (CASP) family. In terms of assembly, homodimer and heterodimers.

Its subcellular location is the cell membrane. In terms of biological role, regulates membrane-cell wall junctions and localized cell wall deposition. Required for establishment of the Casparian strip membrane domain (CSD) and the subsequent formation of Casparian strips, a cell wall modification of the root endodermis that determines an apoplastic barrier between the intraorganismal apoplasm and the extraorganismal apoplasm and prevents lateral diffusion. The sequence is that of Casparian strip membrane protein 5 from Populus trichocarpa (Western balsam poplar).